Consider the following 487-residue polypeptide: Glutamyl-tRNA(Gln) amidotransferase subunit A (487 aa).

Active-site charge relay system residues include Lys-79 and Ser-154. Ser-178 serves as the catalytic Acyl-ester intermediate.

This sequence belongs to the amidase family. GatA subfamily. As to quaternary structure, heterotrimer of A, B and C subunits.

It catalyses the reaction L-glutamyl-tRNA(Gln) + L-glutamine + ATP + H2O = L-glutaminyl-tRNA(Gln) + L-glutamate + ADP + phosphate + H(+). Its function is as follows. Allows the formation of correctly charged Gln-tRNA(Gln) through the transamidation of misacylated Glu-tRNA(Gln) in organisms which lack glutaminyl-tRNA synthetase. The reaction takes place in the presence of glutamine and ATP through an activated gamma-phospho-Glu-tRNA(Gln). This Heliobacterium modesticaldum (strain ATCC 51547 / Ice1) protein is Glutamyl-tRNA(Gln) amidotransferase subunit A.